A 1529-amino-acid chain; its full sequence is Myosin-11 (1529 aa).

The Myosin N-terminal SH3-like domain occupies 11–60 (IVGSHVWIEDSDVAWIDGLVEKINGQDVEVQATNGKKITAKLSKIYPKDM). The region spanning 65-735 (GGVDDMTKLS…QMAELDARRT (671 aa)) is the Myosin motor domain. Residues 159–166 (GESGAGKT) and 212–220 (NNNSSRFGK) each bind ATP. Actin-binding stretches follow at residues 498–532 (LIEK…YQTF), 534–557 (THKR…AGEV), 592–616 (FPPL…KLQL), and 616–638 (LQQL…KPNN). 6 consecutive IQ domains span residues 738–767 (LSAA…ATIS), 761–790 (LRKA…QAAA), 786–815 (RQAA…AALV), 809–838 (LHVA…TKAA), 834–863 (QTKA…GVIL), and 857–886 (LKKG…ASRE). A coiled-coil region spans residues 887–1059 (TGALKEAKDM…VLRQQAVSIA (173 aa)). The span at 993–1027 (EQEKQRADDATRKFDEAQESSEDRKKKLEDTEKKA) shows a compositional bias: basic and acidic residues. 2 disordered regions span residues 993-1031 (EQEK…QQLQ) and 1096-1115 (INRR…LNEK). The Dilute domain maps to 1163 to 1472 (DRIIQTIGQA…IANMRVLMTE (310 aa)).

The protein belongs to the TRAFAC class myosin-kinesin ATPase superfamily. Myosin family. Plant myosin class XI subfamily. Homodimer.

It is found in the cytoplasm. Its function is as follows. Myosin heavy chain that is required for the cell cycle-regulated transport of various organelles and proteins for their segregation. Functions by binding with its tail domain to receptor proteins on organelles and exerting force with its N-terminal motor domain against actin filaments, thereby transporting its cargo along polarized actin cables. Involved in trafficking of Golgi stacks, mitochondria and peroxisomes. The protein is Myosin-11 (XI-E) of Arabidopsis thaliana (Mouse-ear cress).